A 407-amino-acid chain; its full sequence is MPTLSVFTDVPMAQKLEGSLLKTYKQDDNPNKMFLAYKVCMTSKGRPWVSSVVRKTRMQIAQDPSLNYEYTPVMGMKSFVQASLNLLFGKNSQVIVENRAGGVQTVGDSGAFQLGAQFLKSWCQSSQIVYIVSSQKEPHGLIFQDMGFTVYEHTFWDSAHLCLDPNMLLDVVKHAPHGCVFVIGSMGNCQLTPSQWTQLMTLMKSKEIFPFFDIPYQGLSTGDLEEDARFLHYFVSQGFEFFCSQSLSKNFGIYDEGVGTLVVVTLDNQLLLRVLSQLMNFARALWLNPPTTGARIITSVLCNPAMQGEWRQSLEGVVENVMMTKEKVKEKLRLLGTPGSWDHITEQKGSHSYLGLNSQQVEYLISEKHIYIPKNGRINFTCINSYNIDYITSSINEAVCFTKDSER.

Lysine 249 is modified (N6-(pyridoxal phosphate)lysine).

The protein belongs to the class-I pyridoxal-phosphate-dependent aminotransferase family. In terms of assembly, homodimer. Pyridoxal 5'-phosphate serves as cofactor.

The protein resides in the cytoplasm. It catalyses the reaction L-aspartate + 2-oxoglutarate = oxaloacetate + L-glutamate. The sequence is that of Putative aspartate aminotransferase, cytoplasmic 2 (GOT1L1) from Bos taurus (Bovine).